Reading from the N-terminus, the 414-residue chain is Probable 26S proteasome regulatory subunit 6B (414 aa).

202–209 is a binding site for ATP; the sequence is GPPGCGKT.

Belongs to the AAA ATPase family.

It localises to the cytoplasm. Its subcellular location is the nucleus. Functionally, the 26S proteasome is involved in the ATP-dependent degradation of ubiquitinated proteins. The regulatory (or ATPase) complex confers ATP dependency and substrate specificity to the 26S complex. This chain is Probable 26S proteasome regulatory subunit 6B (rpt-3), found in Caenorhabditis elegans.